The chain runs to 1605 residues: Sister chromatid cohesion protein PDS5 homolog A (1605 aa).

HEAT repeat units lie at residues 50 to 89, 96 to 136, 146 to 183, 184 to 221, 261 to 298, 302 to 339, 341 to 378, 380 to 416, 552 to 591, 644 to 681, 723 to 758, 821 to 860, 961 to 1000, and 1050 to 1088; these read KSIQ…ITAP, NIMK…YRSC, DLVK…EESE, DVQE…HCAP, QALS…LPGR, EEFD…SDPL, AEAS…SALT, IPVD…VYCL, ANIW…LYDF, SLFD…TIRE, KSLS…IAMP, AGVD…AAKA, LYPH…QLYL, and HAIC…KPSE. Disordered regions lie at residues 1155–1182 and 1203–1262; these read LRAQ…KNDV and ESSN…PKVQ. The span at 1211-1225 shows a compositional bias: basic and acidic residues; the sequence is SPSERAEICQRDQKG. Residues 1226–1233 carry the Nuclear localization signal 1 motif; sequence NKRNVGDA. Serine 1274 carries the post-translational modification Phosphoserine. Basic and acidic residues predominate over residues 1279 to 1295; sequence NVSLDSHDENSDQEKML. 3 disordered regions span residues 1279-1307, 1324-1353, and 1423-1605; these read NVSL…KKSL, ERSR…SGLA, and GKTA…RTAI. A Phosphoserine modification is found at serine 1299. 2 stretches are compositionally biased toward basic residues: residues 1425 to 1442 and 1464 to 1476; these read TAKK…KRSS and KGKR…LKQL. The Nuclear localization signal 2 signature appears at 1426–1433; it reads AKKSRTSK. 3 stretches are compositionally biased toward basic and acidic residues: residues 1477–1495, 1514–1527, and 1534–1574; these read HPKD…VESR, GEEK…SLKE, and VVNK…NEME. Phosphoserine is present on residues serine 1524, serine 1562, and serine 1584. Residues 1575 to 1585 are compositionally biased toward acidic residues; it reads REAEENAETSD. A Phosphothreonine modification is found at threonine 1588.

The protein belongs to the PDS5 family. As to quaternary structure, interacts with the cohesin complex. Interacts with DEK3.

It is found in the nucleus. In terms of biological role, cohesin cofactor dispensable during the meiotic division but playing an important role in DNA repair by homologous recombination (HR) probably by helping SMC5/SMC6 complex. Regulator of sister chromatid cohesion in mitosis which may stabilize cohesin complex association with chromatin. May couple sister chromatid cohesion during mitosis to DNA replication. Cohesion ensures that chromosome partitioning is accurate in both meiotic and mitotic cells and plays an important role in DNA repair. In Arabidopsis thaliana (Mouse-ear cress), this protein is Sister chromatid cohesion protein PDS5 homolog A.